The following is a 517-amino-acid chain: Splicing factor U2AF 59 kDa subunit (517 aa).

Positions 1–13 (MDLSSRLSSGSSR) are enriched in low complexity. The tract at residues 1–112 (MDLSSRLSSG…PSRERSVRSI (112 aa)) is disordered. A compositionally biased stretch (basic and acidic residues) spans 20–89 (DYRDEEPRRE…RRYDDYEPRS (70 aa)). RRM domains are found at residues 310–388 (DKIY…FACV) and 418–509 (RVLQ…FYGE).

It belongs to the splicing factor SR family. Forms a heterodimer with the U2AF small subunit. Can also form a homodimer. U2AF large subunit (U2AF59), U2AF small subunit (U2AF23) and SF1 (bpb1) interact to form a complex required for complex A formation. Interacts with wat1/pop3.

It localises to the nucleus. Necessary for the splicing of pre-mRNA. The SF1-U2AF59-U2AF23 complex has a role in the recognition of the branch site (5'-UACUAAC-3'), the pyrimidine tract and the 3'-splice site at the 3'-end of introns. This Schizosaccharomyces pombe (strain 972 / ATCC 24843) (Fission yeast) protein is Splicing factor U2AF 59 kDa subunit (prp2).